The sequence spans 314 residues: Putative gluconeogenesis factor (314 aa).

Belongs to the gluconeogenesis factor family.

It is found in the cytoplasm. Functionally, required for morphogenesis under gluconeogenic growth conditions. This is Putative gluconeogenesis factor from Thermotoga maritima (strain ATCC 43589 / DSM 3109 / JCM 10099 / NBRC 100826 / MSB8).